We begin with the raw amino-acid sequence, 601 residues long: MSKVRIYTLAKDLGVDNAKMLEILDGLGVAYKSVSSTIEEDTVELIKQILEEEGHTASAEPAPAQASGSPASPAQTEAQEAPQPTATATAEREPAAPPARELPHRAPVVTIMGHVDHGKTSLLDYIRKTKVAAKEAGGITQHVGAFEAKTSKGKIVFIDTPGHEAFTTIRARGANVADIAVIVIAADDSLMPQTREAIAHAQAAKVPMIVAINKVDLPQADPEKVKTDLTQLNLVPEEYGGDLIVVPVSAKTGEGVEDLLEYISLTAELEDLRADPQGEFSGVIIESRVDRQAGVLATVMVQEGTLHVGDFLVVGENYGKVKAMTDSNGGRIKEAGPSTPVQVLGFSEAPSSGEKVVSVKNEHAARELVAQRVETRREAENARVQRKKTLEEMMGPLGETRTVNLILRADTQGSLEAIQGILARKETEDVKLNVMLAGIGSPTEGDVLLASTADATILCFNVTASGSVKKAAEQRDIELKSFRIIYELIDEVDRLIKGNVEPVFEERPLGRAEVRMVIRHPKSGNIAGSYVTDGLLRRNAKARVLRGKQVVYEGTIVGLKRFKDDVREVQAGYECGVNLDWNDVQEGDIIEASELVEVAQA.

Positions 54 to 101 (GHTASAEPAPAQASGSPASPAQTEAQEAPQPTATATAEREPAAPPARE) are disordered. The span at 57-89 (ASAEPAPAQASGSPASPAQTEAQEAPQPTATAT) shows a compositional bias: low complexity. One can recognise a tr-type G domain in the interval 104-273 (HRAPVVTIMG…SLTAELEDLR (170 aa)). The segment at 113–120 (GHVDHGKT) is G1. Position 113 to 120 (113 to 120 (GHVDHGKT)) interacts with GTP. Residues 138–142 (GITQH) form a G2 region. The tract at residues 159 to 162 (DTPG) is G3. GTP contacts are provided by residues 159–163 (DTPGH) and 213–216 (NKVD). The interval 213–216 (NKVD) is G4. Positions 249–251 (SAK) are G5.

Belongs to the TRAFAC class translation factor GTPase superfamily. Classic translation factor GTPase family. IF-2 subfamily.

The protein resides in the cytoplasm. In terms of biological role, one of the essential components for the initiation of protein synthesis. Protects formylmethionyl-tRNA from spontaneous hydrolysis and promotes its binding to the 30S ribosomal subunits. Also involved in the hydrolysis of GTP during the formation of the 70S ribosomal complex. The chain is Translation initiation factor IF-2 from Deinococcus geothermalis (strain DSM 11300 / CIP 105573 / AG-3a).